The chain runs to 137 residues: Peptide methionine sulfoxide reductase MsrB (137 aa).

Positions 7–129 constitute a MsrB domain; it reads AEELKKNLSD…NSASLRFTDG (123 aa). 4 residues coordinate Zn(2+): Cys46, Cys49, Cys95, and Cys98. The active-site Nucleophile is Cys118.

The protein belongs to the MsrB Met sulfoxide reductase family. Requires Zn(2+) as cofactor.

The catalysed reaction is L-methionyl-[protein] + [thioredoxin]-disulfide + H2O = L-methionyl-(R)-S-oxide-[protein] + [thioredoxin]-dithiol. The sequence is that of Peptide methionine sulfoxide reductase MsrB from Shigella dysenteriae serotype 1 (strain Sd197).